Here is a 59-residue protein sequence, read N- to C-terminus: Large ribosomal subunit protein bL32 (59 aa).

The segment at 1–25 (MAVQQNKKSPSKRGMHRSHDFLNAA) is disordered.

It belongs to the bacterial ribosomal protein bL32 family.

The protein is Large ribosomal subunit protein bL32 of Paraburkholderia phymatum (strain DSM 17167 / CIP 108236 / LMG 21445 / STM815) (Burkholderia phymatum).